We begin with the raw amino-acid sequence, 202 residues long: Sperm-specific H1/protamine-like protein type 1 (202 aa).

Over residues 1–35 (MPSPSRKSRSRSRSRSKSPKRSPAKKARKTPKKPR) the composition is skewed to basic residues. 2 disordered regions span residues 1–46 (MPSP…PTTL) and 104–202 (KTSA…QFAL). Positions 41–120 (KKPTTLSMIV…GATGSFRVGK (80 aa)) constitute an H15 domain. The segment covering 126 to 156 (KKAKKAKSPKKKSSKKSKNKSNNAKAKKSPK) has biased composition (basic residues). The segment covering 177–187 (GARYPFRYQAY) has biased composition (low complexity).

OE1 and OE3 are produced by post-translational cleavage of a common precursor. Sperm.

It is found in the nucleus. Its subcellular location is the chromosome. Functionally, linker histones are implicated in chromatin remodeling and/or transcriptional regulation during spermiogenesis, the process of spermatid maturation into spermatozoa. Protamines substitute for histones in the chromatin of sperm during the haploid phase of spermatogenesis. They compact sperm DNA into a highly condensed, stable and inactive complex. This chain is Sperm-specific H1/protamine-like protein type 1, found in Ostrea edulis (Native oyster).